The following is a 416-amino-acid chain: Methylthioribose-1-phosphate isomerase (416 aa).

Residue Asp280 is the Proton donor of the active site.

This sequence belongs to the eIF-2B alpha/beta/delta subunits family. MtnA subfamily.

The protein resides in the cytoplasm. It localises to the nucleus. The catalysed reaction is 5-(methylsulfanyl)-alpha-D-ribose 1-phosphate = 5-(methylsulfanyl)-D-ribulose 1-phosphate. It functions in the pathway amino-acid biosynthesis; L-methionine biosynthesis via salvage pathway; L-methionine from S-methyl-5-thio-alpha-D-ribose 1-phosphate: step 1/6. Functionally, catalyzes the interconversion of methylthioribose-1-phosphate (MTR-1-P) into methylthioribulose-1-phosphate (MTRu-1-P). In Candida albicans (strain SC5314 / ATCC MYA-2876) (Yeast), this protein is Methylthioribose-1-phosphate isomerase.